We begin with the raw amino-acid sequence, 714 residues long: T-cell activation Rho GTPase-activating protein (714 aa).

The 190-residue stretch at 88–277 (QPLSIICGEN…FLIDNCFEIF (190 aa)) folds into the Rho-GAP domain. Disordered regions lie at residues 290-357 (DDSL…ESSV), 370-419 (QDRR…AEDP), 451-508 (QGHI…HSMS), 520-563 (RTSS…QSQT), and 623-650 (KPST…HRLS). Residues 299 to 311 (SDVSTLQNDSAYD) show a composition bias toward polar residues. S398 bears the Phosphoserine mark. Positions 459–471 (SRSSPGESLGSSP) are enriched in low complexity. Composition is skewed to basic and acidic residues over residues 492 to 501 (KTDKTKPQRE) and 527 to 545 (EKSK…RKES).

Highly expressed in testis.

May function as a GTPase-activating protein. May play a role in transmission ratio distortion (TRD) in mouse, in which heterozygous males for t-locus transmit their t-carrying chromosome to 95% or more of their offspring. This Mus musculus (Mouse) protein is T-cell activation Rho GTPase-activating protein (Tagap).